Consider the following 456-residue polypeptide: uncharacterized protein (456 aa).

Residues 2 to 60 enclose the TRAM domain; it reads AMRKGKEYELNIEEIEFPSMGIAYHEGLKVYVKHGIPGQKVLARITTKKKDHAKGKIIE. The [4Fe-4S] cluster site is built by C73, C79, C82, and C162. 4 residues coordinate S-adenosyl-L-methionine: Q288, Y317, E338, and D383. Residue C410 is the Nucleophile of the active site.

Belongs to the class I-like SAM-binding methyltransferase superfamily. RNA M5U methyltransferase family.

This is an uncharacterized protein from Clostridium tetani (strain Massachusetts / E88).